Here is a 489-residue protein sequence, read N- to C-terminus: Glutamyl-tRNA(Gln) amidotransferase subunit A (489 aa).

Catalysis depends on charge relay system residues lysine 77 and serine 152. Serine 176 acts as the Acyl-ester intermediate in catalysis.

This sequence belongs to the amidase family. GatA subfamily. Heterotrimer of A, B and C subunits.

It carries out the reaction L-glutamyl-tRNA(Gln) + L-glutamine + ATP + H2O = L-glutaminyl-tRNA(Gln) + L-glutamate + ADP + phosphate + H(+). Allows the formation of correctly charged Gln-tRNA(Gln) through the transamidation of misacylated Glu-tRNA(Gln) in organisms which lack glutaminyl-tRNA synthetase. The reaction takes place in the presence of glutamine and ATP through an activated gamma-phospho-Glu-tRNA(Gln). This Levilactobacillus brevis (strain ATCC 367 / BCRC 12310 / CIP 105137 / JCM 1170 / LMG 11437 / NCIMB 947 / NCTC 947) (Lactobacillus brevis) protein is Glutamyl-tRNA(Gln) amidotransferase subunit A.